Reading from the N-terminus, the 455-residue chain is Ornithine decarboxylase (455 aa).

An N6-(pyridoxal phosphate)lysine modification is found at Lys67. Residues Ser197, Gly234, and 271-274 contribute to the pyridoxal 5'-phosphate site; that span reads EPGR. At Ser297 the chain carries Phosphoserine; by CK2. A substrate-binding site is contributed by 325 to 326; that stretch reads YD. Cys354 serves as the catalytic Proton donor; shared with dimeric partner. The residue at position 354 (Cys354) is an S-nitrosocysteine. Asp355 lines the substrate pocket. Position 383 (Tyr383) interacts with pyridoxal 5'-phosphate.

This sequence belongs to the Orn/Lys/Arg decarboxylase class-II family. As to quaternary structure, homodimer. Only the dimer is catalytically active, as the active sites are constructed of residues from both monomers. The cofactor is pyridoxal 5'-phosphate.

It catalyses the reaction L-ornithine + H(+) = putrescine + CO2. Its pathway is amine and polyamine biosynthesis; putrescine biosynthesis via L-ornithine pathway; putrescine from L-ornithine: step 1/1. Inhibited by antizymes (AZs) OAZ1, OAZ2 and OAZ3 in response to polyamine levels. AZs inhibit the assembly of the functional homodimer by binding to ODC monomers. Additionally, OAZ1 targets ODC monomers for ubiquitin-independent proteolytic destruction by the 26S proteasome. Catalyzes the first and rate-limiting step of polyamine biosynthesis that converts ornithine into putrescine, which is the precursor for the polyamines, spermidine and spermine. Polyamines are essential for cell proliferation and are implicated in cellular processes, ranging from DNA replication to apoptosis. This chain is Ornithine decarboxylase (ODC1), found in Cricetulus griseus (Chinese hamster).